Here is a 179-residue protein sequence, read N- to C-terminus: Peroxiredoxin (179 aa).

One can recognise a Thioredoxin domain in the interval 2 to 152 (TMEKQVPIVT…VEGWFEEEGF (151 aa)). Residue Cys-56 is the Cysteine sulfenic acid (-SOH) intermediate (for peroxiredoxin activity) of the active site.

This sequence belongs to the peroxiredoxin family. Prx5 subfamily. In terms of assembly, monomer.

The catalysed reaction is a hydroperoxide + 2 glutathione = an alcohol + glutathione disulfide + H2O. Its function is as follows. Thiol-specific peroxidase that catalyzes the reduction of hydrogen peroxide and organic hydroperoxides to water and alcohols, respectively. Plays a role in cell protection against oxidative stress by detoxifying peroxides. The sequence is that of Peroxiredoxin from Rhizobium etli.